Reading from the N-terminus, the 267-residue chain is 5'-nucleotidase SurE (267 aa).

The a divalent metal cation site is built by Asp-9, Asp-10, Ser-40, and Asn-97.

The protein belongs to the SurE nucleotidase family. The cofactor is a divalent metal cation.

The protein localises to the cytoplasm. The catalysed reaction is a ribonucleoside 5'-phosphate + H2O = a ribonucleoside + phosphate. Its function is as follows. Nucleotidase that shows phosphatase activity on nucleoside 5'-monophosphates. The polypeptide is 5'-nucleotidase SurE (Helicobacter pylori (strain P12)).